Reading from the N-terminus, the 395-residue chain is Succinate--CoA ligase [ADP-forming] subunit beta (395 aa).

Residues 9–240 (RDVFEKHGVP…AASADPLEAK (232 aa)) form the ATP-grasp domain. ATP-binding positions include Lys49, 56–58 (GRG), Ala98, and Glu103. Mg(2+) contacts are provided by Asn195 and Asp209. Residues Asn260 and 322–324 (GIT) contribute to the substrate site.

Belongs to the succinate/malate CoA ligase beta subunit family. Heterotetramer of two alpha and two beta subunits. Mg(2+) serves as cofactor.

It carries out the reaction succinate + ATP + CoA = succinyl-CoA + ADP + phosphate. It catalyses the reaction GTP + succinate + CoA = succinyl-CoA + GDP + phosphate. It participates in carbohydrate metabolism; tricarboxylic acid cycle; succinate from succinyl-CoA (ligase route): step 1/1. Its function is as follows. Succinyl-CoA synthetase functions in the citric acid cycle (TCA), coupling the hydrolysis of succinyl-CoA to the synthesis of either ATP or GTP and thus represents the only step of substrate-level phosphorylation in the TCA. The beta subunit provides nucleotide specificity of the enzyme and binds the substrate succinate, while the binding sites for coenzyme A and phosphate are found in the alpha subunit. This Beutenbergia cavernae (strain ATCC BAA-8 / DSM 12333 / CCUG 43141 / JCM 11478 / NBRC 16432 / NCIMB 13614 / HKI 0122) protein is Succinate--CoA ligase [ADP-forming] subunit beta.